Consider the following 156-residue polypeptide: Ribosome maturation factor RimP (156 aa).

Belongs to the RimP family.

Its subcellular location is the cytoplasm. Functionally, required for maturation of 30S ribosomal subunits. The protein is Ribosome maturation factor RimP of Halalkalibacterium halodurans (strain ATCC BAA-125 / DSM 18197 / FERM 7344 / JCM 9153 / C-125) (Bacillus halodurans).